Here is a 414-residue protein sequence, read N- to C-terminus: 2,3-diketo-5-methylthiopentyl-1-phosphate enolase (414 aa).

The active-site Proton acceptor is the Lys99. Residues Lys148, 174-177, His265, Gly338, and 360-361 contribute to the substrate site; these read KDDE and GG. Lys174, Asp176, and Glu177 together coordinate Mg(2+). Lys174 bears the N6-carboxylysine mark.

This sequence belongs to the RuBisCO large chain family. Type IV subfamily. Homodimer. Mg(2+) is required as a cofactor.

The catalysed reaction is 5-methylsulfanyl-2,3-dioxopentyl phosphate = 2-hydroxy-5-methylsulfanyl-3-oxopent-1-enyl phosphate. Its pathway is amino-acid biosynthesis; L-methionine biosynthesis via salvage pathway; L-methionine from S-methyl-5-thio-alpha-D-ribose 1-phosphate: step 3/6. Its function is as follows. Catalyzes the enolization of 2,3-diketo-5-methylthiopentyl-1-phosphate (DK-MTP-1-P) into 2-hydroxy-3-keto-5-methylthiopentenyl-1-phosphate (HK-MTPenyl-1-P). This chain is 2,3-diketo-5-methylthiopentyl-1-phosphate enolase, found in Bacillus anthracis (strain CDC 684 / NRRL 3495).